We begin with the raw amino-acid sequence, 69 residues long: Conotoxin Eb6.19 (69 aa).

The N-terminal stretch at 1 to 17 is a signal peptide; it reads VLIIAVLFLTACQLTTA. Positions 18 to 41 are excised as a propeptide; it reads ETYSRGRQKHRARRSTDKNSKWTR. Cystine bridges form between C43-C57, C50-C61, and C56-C68.

It belongs to the conotoxin O1 superfamily. As to expression, expressed by the venom duct.

It localises to the secreted. In Conus ebraeus (Hebrew cone), this protein is Conotoxin Eb6.19 (E1).